We begin with the raw amino-acid sequence, 257 residues long: Putative hydro-lyase Bcep18194_B2576 (257 aa).

This sequence belongs to the D-glutamate cyclase family.

This Burkholderia lata (strain ATCC 17760 / DSM 23089 / LMG 22485 / NCIMB 9086 / R18194 / 383) protein is Putative hydro-lyase Bcep18194_B2576.